A 531-amino-acid polypeptide reads, in one-letter code: 5-(hydroxymethyl)furfural oxidase (531 aa).

FAD is bound by residues 15 to 16, 36 to 37, Trp-68, Leu-94, Gly-98, 102 to 105, Val-233, and Trp-466; these read TA, EA, and NMVV. His-467 serves as the catalytic Proton acceptor. FAD-binding positions include Ala-501 and 512–513; that span reads TN.

It belongs to the GMC oxidoreductase family. In terms of assembly, monomer. The cofactor is FAD.

It catalyses the reaction 5-hydroxymethylfurfural + 3 O2 + 2 H2O = 2,5-dicarboxyfuran + 3 H2O2 + 2 H(+). The catalysed reaction is benzylthiol + O2 = benzothialdehyde + H2O2. Involved in the degradation and detoxification of 5-(hydroxymethyl)furfural (HMF) by mediating its oxidation to furan-2,5-dicarboxylate (FDCA), a biobased platform chemical for the production of polymers. Active with a wide range of aromatic and aliphatic primary alcohols and aldehydes: acts on alcohol groups and requires the spontaneous hydration of aldehyde groups for their oxidation. To a lesser extent, is also able to catalyze the oxidation of thiols that are structurally similar to its alcohol substrates, yielding the corresponding thiocarbonyls. The protein is 5-(hydroxymethyl)furfural oxidase of Methylovorus sp. (strain MP688).